We begin with the raw amino-acid sequence, 568 residues long: Urease subunit alpha (568 aa).

The 439-residue stretch at 130–568 (GGIDTHIHFI…LPMAQRYFLF (439 aa)) folds into the Urease domain. Residues H135, H137, and K218 each coordinate Ni(2+). K218 is subject to N6-carboxylysine. H220 is a binding site for substrate. Residues H247 and H273 each contribute to the Ni(2+) site. H321 functions as the Proton donor in the catalytic mechanism. Residue D361 participates in Ni(2+) binding.

This sequence belongs to the metallo-dependent hydrolases superfamily. Urease alpha subunit family. In terms of assembly, heterotrimer of UreA (gamma), UreB (beta) and UreC (alpha) subunits. Three heterotrimers associate to form the active enzyme. The cofactor is Ni cation. Carboxylation allows a single lysine to coordinate two nickel ions.

It is found in the cytoplasm. It catalyses the reaction urea + 2 H2O + H(+) = hydrogencarbonate + 2 NH4(+). Its pathway is nitrogen metabolism; urea degradation; CO(2) and NH(3) from urea (urease route): step 1/1. This chain is Urease subunit alpha, found in Burkholderia vietnamiensis (strain G4 / LMG 22486) (Burkholderia cepacia (strain R1808)).